A 42-amino-acid polypeptide reads, in one-letter code: Snaclec lebecetin subunit alpha (42 aa).

Positions 1–42 (DQDCLPGWSSHEGHCYKVFNLDKTWEDAEKFCTEQPSNGHLV) constitute a C-type lectin domain. Residues Cys4 and Cys15 are joined by a disulfide bond.

As to quaternary structure, heterodimer of subunits alpha and beta; disulfide-linked. It depends on Ca(2+) as a cofactor. Glycosylated. In terms of tissue distribution, expressed by the venom gland.

It is found in the secreted. Binds to the platelet GPIb/IX/V receptor system and inhibits ristocetin-induced platelet aggregation in human platelet-rich plasma. Strongly inhibits platelet aggregation induced by ADP, calcium ionophore, thrombin and collagen. Does not inhibit U46619-induced platelet aggregation. This chain is Snaclec lebecetin subunit alpha, found in Macrovipera lebetinus (Levantine viper).